A 5104-amino-acid polypeptide reads, in one-letter code: Malformin synthetase mlfA (5104 aa).

Positions 225 to 616 (ERHAVNRPHS…CGRADTQVKL (392 aa)) are adenylation 1. Residues 757–830 (SRLEQEIQLA…EAASLAEVQE (74 aa)) form the Carrier 1 domain. Ser-791 is subject to O-(pantetheine 4'-phosphoryl)serine. A condensation 1 region spans residues 868 to 1299 (EDVFPCTTMQ…ALNTLSLLQA (432 aa)). The tract at residues 1327-1716 (DRWVTRQPEG…GRKDTQVKLR (390 aa)) is adenylation 2. The Carrier 2 domain maps to 1854–1931 (TPASELERTL…QLAAEFGGPA (78 aa)). Position 1891 is an O-(pantetheine 4'-phosphoryl)serine (Ser-1891). Disordered stretches follow at residues 1928 to 1961 (GGPA…DGVD) and 1998 to 2025 (TNKT…KVDS). 2 stretches are compositionally biased toward low complexity: residues 1934–1958 (SASS…STND) and 2003–2013 (SVSSSSSSSSS). A condensation 2 region spans residues 2066-2481 (EDIYPATPLQ…TVSYSDKEAL (416 aa)). Residues 2504–2896 (VRTPHAPAVC…IGRRDGQLKL (393 aa)) are adenylation 3. The region spanning 3032 to 3108 (RPVTSQEREM…QLICHLNTIR (77 aa)) is the Carrier 3 domain. At Ser-3069 the chain carries O-(pantetheine 4'-phosphoryl)serine. 2 condensation regions span residues 3125-3590 (WVAL…TYDQ) and 3611-4029 (NIYP…EQLV). An adenylation 4 region spans residues 4054-4444 (HSSREAVCAW…VGRKDNQIKF (391 aa)). The 77-residue stretch at 4578–4654 (MPSTAAERKM…DLSDQARSLI (77 aa)) folds into the Carrier 4 domain. O-(pantetheine 4'-phosphoryl)serine is present on Ser-4615. Residues 4691 to 5018 (DVLPTTSFQR…LQTIVQHQNN (328 aa)) are condensation 5.

It belongs to the NRP synthetase family.

The protein operates within secondary metabolite biosynthesis. Its function is as follows. Nonribosomal peptide synthetase; part of the gene cluster that mediates the biosynthesis of malformins, cyclic pentapeptides with a disulfide bond between 2 consecutive cysteins, that show potential anti-tumor as well as antimalarial and antitrypanosomal properties. The nonribosomal peptide synthetase mlfA is responsible of the formation of the cyclic pentapeptide. The malformin biosynthesis clusters in malformin-producing fungi also contain enzymes involved in the formation of the disulfide bond between the two consecutive cysteins within malformins, in addition to additional tailoring enzymes such as methyltransferases or oxidoreductases. They are also composed of up to 4 major facilitator superfamily transporters, and transcription factors probably involved in the regulation of the expression of those clusters. In Aspergillus vadensis (strain CBS 113365 / IMI 142717 / IBT 24658), this protein is Malformin synthetase mlfA.